The primary structure comprises 67 residues: Lantibiotic Flvbeta.b (67 aa).

Positions 1 to 34 (MDNNTKLQKLYEQLAATGSEKELDAMLDENMAGA) are cleaved as a propeptide — cleaved by FlvT. Position 36 is a 2,3-didehydroalanine (Ser); by FlvM2 (serine 36). Threonine 39 and threonine 43 each carry 2,3-didehydrobutyrine; by FlvM2. Cross-links (beta-methyllanthionine (Thr-Cys); by FlvM2) lie at residues 50–56 (TTGFDWC), 58–61 (TGAC), and 62–65 (TYSC).

In terms of processing, contains DL-beta-methyllanthionine, when coepressed in E.coli with the flavecin synthetase FlvM2.

It is found in the secreted. Functionally, lanthionine-containing peptide antibiotic (lantibiotic) only active on Gram-positive bacteria in synergy with Flvalpha.a. Is not active in absence of Flvalpha.a, which is encoded by the same operon than Flvbeta.b. The bactericidal activity of lantibiotics is based on depolarization of energized bacterial cytoplasmic membranes, initiated by the formation of aqueous transmembrane pores. This chain is Lantibiotic Flvbeta.b, found in Ruminococcus flavefaciens.